The sequence spans 512 residues: Solute carrier family 2, facilitated glucose transporter member 7 (512 aa).

At 1–21 the chain is on the cytoplasmic side; that stretch reads MENKEAGTPPPIPSREGRLQP. Residues 22–42 form a helical membrane-spanning segment; sequence TLLLATLSAAFGSAFQYGYNL. Topologically, residues 43–78 are extracellular; sequence SVVNTPHKVFKSFYNETYFERHATFMDGKLMLLLWS. N57 is a glycosylation site (N-linked (GlcNAc...) asparagine). Residues 79-99 traverse the membrane as a helical segment; it reads CTVSMFPLGGLLGSLLVGLLV. The Cytoplasmic segment spans residues 100–107; it reads DSCGRKGT. Residues 108–128 traverse the membrane as a helical segment; it reads LLINNIFAIIPAILMGVSKVA. Residues 129-138 are Extracellular-facing; sequence KAFELIVFSR. A helical membrane pass occupies residues 139–159; sequence VVLGVCAGISYSALPMYLGEL. The Cytoplasmic segment spans residues 160–172; that stretch reads APKNLRGMVGTMT. Residues 173–193 form a helical membrane-spanning segment; that stretch reads EVFVIVGVFLAQIFSLQAILG. At 194–198 the chain is on the extracellular side; the sequence is NPAGW. Residues 199 to 219 traverse the membrane as a helical segment; sequence PVLLALTGVPALLQLLTLPFF. The Cytoplasmic segment spans residues 220–281; that stretch reads PESPRYSLIQ…LHLCALRSLR (62 aa). Residues 282 to 302 traverse the membrane as a helical segment; that stretch reads WQLLSIIVLMAGQQLSGINAI. D-glucose contacts are provided by residues 294–295 and N300; that span reads QQ. Over 303-321 the chain is Extracellular; that stretch reads NYYADTIYTSAGVEAAHSQ. Residues 322 to 342 form a helical membrane-spanning segment; that stretch reads YVTVGSGVVNIVMTITSAVLV. N331 contributes to the D-glucose binding site. Residues 343–350 are Cytoplasmic-facing; the sequence is ERLGRRHL. Residues 351-371 form a helical membrane-spanning segment; the sequence is LLAGYGICGSACLVLTVVLLF. At 372–379 the chain is on the extracellular side; that stretch reads QNRVPELS. Residues 380 to 400 form a helical membrane-spanning segment; that stretch reads YLGIICVFAYIAGHSIGPSPV. Residues 401–415 are Cytoplasmic-facing; the sequence is PSVVRTEIFLQSSRR. A helical membrane pass occupies residues 416 to 436; it reads AAFMVDGAVHWLTNFIIGFLF. The Extracellular portion of the chain corresponds to 437 to 445; the sequence is PSIQEAIGA. The chain crosses the membrane as a helical span at residues 446–466; that stretch reads YSFIIFAGICLLTAIYIYVVI. The Cytoplasmic portion of the chain corresponds to 467–512; the sequence is PETKGKTFVEINRIFAKRNRVKLPEEKEETIDAGPPTASPAKETSF. The interval 491–512 is disordered; the sequence is EEKEETIDAGPPTASPAKETSF.

It belongs to the major facilitator superfamily. Sugar transporter (TC 2.A.1.1) family. Glucose transporter subfamily. Expressed in small intestine and colon. Weakly expressed in testis and prostate.

The protein localises to the cell membrane. It localises to the apical cell membrane. The enzyme catalyses D-glucose(out) = D-glucose(in). It carries out the reaction D-fructose(out) = D-fructose(in). With respect to regulation, glucose and fructose transport are inhibited by the flavonoid apigenin. Its function is as follows. Probable sugar transporter. Even if its physiological substrate is subject to discussion, it is able to transport glucose and fructose. Does not transport galactose, 2-deoxy-d-glucose and xylose. This Homo sapiens (Human) protein is Solute carrier family 2, facilitated glucose transporter member 7.